Consider the following 312-residue polypeptide: Malate dehydrogenase (312 aa).

Residues 7–13 and Asp34 each bind NAD(+); that span reads GAAGGIG. 2 residues coordinate substrate: Arg81 and Arg87. Residues Asn94 and 117–119 contribute to the NAD(+) site; that span reads ITN. Positions 119 and 153 each coordinate substrate. The Proton acceptor role is filled by His177. Met227 serves as a coordination point for NAD(+).

This sequence belongs to the LDH/MDH superfamily. MDH type 1 family. In terms of assembly, homodimer.

The catalysed reaction is (S)-malate + NAD(+) = oxaloacetate + NADH + H(+). In terms of biological role, catalyzes the reversible oxidation of malate to oxaloacetate. The polypeptide is Malate dehydrogenase (Yersinia pseudotuberculosis serotype O:1b (strain IP 31758)).